The chain runs to 85 residues: Hepcidin (85 aa).

Residues 1 to 22 (MALSTRIQAACLLLLLLASVAS) form the signal peptide. Positions 23–54 (VSVLPHQTGQLTDLRAQDTAGAEAGLQPTLQL) are excised as a propeptide. 4 disulfides stabilise this stretch: Cys-67–Cys-83, Cys-70–Cys-73, Cys-71–Cys-79, and Cys-74–Cys-82.

This sequence belongs to the hepcidin family. As to quaternary structure, interacts with SLC40A1; this interaction promotes SLC40A1 rapid ubiquitination.

It is found in the secreted. In terms of biological role, liver-produced hormone that constitutes the main circulating regulator of iron absorption and distribution across tissues. Acts by promoting endocytosis and degradation of ferroportin/SLC40A1, leading to the retention of iron in iron-exporting cells and decreased flow of iron into plasma. Controls the major flows of iron into plasma: absorption of dietary iron in the intestine, recycling of iron by macrophages, which phagocytose old erythrocytes and other cells, and mobilization of stored iron from hepatocytes. Its function is as follows. Has strong antimicrobial activity against E.coli ML35P N.cinerea and weaker against S.epidermidis, S.aureus and group b streptococcus bacteria. Active against the fungus C.albicans. No activity against P.aeruginosa. The protein is Hepcidin (HAMP) of Canis lupus familiaris (Dog).